A 570-amino-acid polypeptide reads, in one-letter code: Urease subunit alpha (570 aa).

The Urease domain maps to 135–570 (GGLDIHIHFN…ELPLAKRYSL (436 aa)). 3 residues coordinate Ni(2+): His-140, His-142, and Lys-219. Lys-219 is subject to N6-carboxylysine. His-221 is a substrate binding site. His-248 and His-274 together coordinate Ni(2+). Residue His-322 is the Proton donor of the active site. Residue Asp-362 coordinates Ni(2+).

Belongs to the metallo-dependent hydrolases superfamily. Urease alpha subunit family. As to quaternary structure, heterotrimer of UreA (gamma), UreB (beta) and UreC (alpha) subunits. Three heterotrimers associate to form the active enzyme. It depends on Ni cation as a cofactor. In terms of processing, carboxylation allows a single lysine to coordinate two nickel ions.

It is found in the cytoplasm. The enzyme catalyses urea + 2 H2O + H(+) = hydrogencarbonate + 2 NH4(+). It functions in the pathway nitrogen metabolism; urea degradation; CO(2) and NH(3) from urea (urease route): step 1/1. This chain is Urease subunit alpha, found in Haloquadratum walsbyi (strain DSM 16790 / HBSQ001).